Reading from the N-terminus, the 104-residue chain is L-rhamnose mutarotase (104 aa).

Tyr-18 provides a ligand contact to substrate. His-22 (proton donor) is an active-site residue. Substrate contacts are provided by residues Tyr-41 and 76-77; that span reads WW.

The protein belongs to the rhamnose mutarotase family. In terms of assembly, homodimer.

The protein resides in the cytoplasm. It carries out the reaction alpha-L-rhamnose = beta-L-rhamnose. It participates in carbohydrate metabolism; L-rhamnose metabolism. In terms of biological role, involved in the anomeric conversion of L-rhamnose. This Lactiplantibacillus plantarum (strain ATCC BAA-793 / NCIMB 8826 / WCFS1) (Lactobacillus plantarum) protein is L-rhamnose mutarotase.